Here is a 230-residue protein sequence, read N- to C-terminus: MEKLTTLTGVGVPLRRSNVDTDQIIPAVFLKRVTKSGFDDALFYAWRRDPNFVLNKPEYAGKGQILVAGPEFGIGSSREHAVWALHDYGFRVVIAPSFADIFYGNTAKNGVLAAIMPQESVELLWKLLEEEPGREMTVSLETRTVTCGDVTLPFEVNDYVRWRLMNGYDDIDLTLQHEDDIAAYEKMRAEKFPFKPKTIPAKHWAEERIESAREPEDADWTGPLADRGII.

The protein belongs to the LeuD family. LeuD type 1 subfamily. As to quaternary structure, heterodimer of LeuC and LeuD.

It carries out the reaction (2R,3S)-3-isopropylmalate = (2S)-2-isopropylmalate. It participates in amino-acid biosynthesis; L-leucine biosynthesis; L-leucine from 3-methyl-2-oxobutanoate: step 2/4. In terms of biological role, catalyzes the isomerization between 2-isopropylmalate and 3-isopropylmalate, via the formation of 2-isopropylmaleate. The chain is 3-isopropylmalate dehydratase small subunit from Bifidobacterium longum (strain DJO10A).